The sequence spans 193 residues: Interferon lambda-2 (193 aa).

Positions 1–19 (MLLLLLPLLLAAVLTRTQA) are cleaved as a signal peptide. The N-linked (GlcNAc...) asparagine glycan is linked to Asn105.

This sequence belongs to the lambda interferon family.

The protein localises to the secreted. Functionally, cytokine with antiviral, antitumour and immunomodulatory activities. Plays a critical role in the antiviral host defense, predominantly in the epithelial tissues. Acts as a ligand for the heterodimeric class II cytokine receptor composed of IL10RB and IFNLR1, and receptor engagement leads to the activation of the JAK/STAT signaling pathway resulting in the expression of IFN-stimulated genes (ISG), which mediate the antiviral state. Has a restricted receptor distribution and therefore restricted targets: is primarily active in epithelial cells and this cell type-selective action is because of the epithelial cell-specific expression of its receptor IFNLR1. Seems not to be essential for early virus-activated host defense in vaginal infection, but plays an important role in Toll-like receptor (TLR)-induced antiviral defense. Plays a significant role in the antiviral immune defense in the intestinal epithelium. Exerts an immunomodulatory effect by up-regulating MHC class I antigen expression. The sequence is that of Interferon lambda-2 (Ifnl2) from Mus musculus (Mouse).